The sequence spans 347 residues: S-adenosylmethionine:tRNA ribosyltransferase-isomerase (347 aa).

The protein belongs to the QueA family. Monomer.

The protein localises to the cytoplasm. It carries out the reaction 7-aminomethyl-7-carbaguanosine(34) in tRNA + S-adenosyl-L-methionine = epoxyqueuosine(34) in tRNA + adenine + L-methionine + 2 H(+). It functions in the pathway tRNA modification; tRNA-queuosine biosynthesis. Its function is as follows. Transfers and isomerizes the ribose moiety from AdoMet to the 7-aminomethyl group of 7-deazaguanine (preQ1-tRNA) to give epoxyqueuosine (oQ-tRNA). This Ectopseudomonas mendocina (strain ymp) (Pseudomonas mendocina) protein is S-adenosylmethionine:tRNA ribosyltransferase-isomerase.